Reading from the N-terminus, the 205-residue chain is MQRTRELESSVAIDQTEVPRSRFFIMVKKLSRVADIVYIVDTFLIPPLHPLKKQHPKVAKFLKVQLVFDLISLFIFATHQLLLLEDGNFGKHYFKRKTKRCSKFSCSRCNANAHHPKWFKFKHSLLCLGTFCFGVYSLVKINKFFKTDQTVDLNRLLELFFWQLNAILNMKLFAFYGDHLESHSAPLDVYEDSFANKSSSGGDEV.

Residues 1–63 are Cytoplasmic-facing; sequence MQRTRELESS…QHPKVAKFLK (63 aa). The chain crosses the membrane as a helical span at residues 64–84; it reads VQLVFDLISLFIFATHQLLLL. The Extracellular portion of the chain corresponds to 85 to 124; the sequence is EDGNFGKHYFKRKTKRCSKFSCSRCNANAHHPKWFKFKHS. The chain crosses the membrane as a helical span at residues 125–145; that stretch reads LLCLGTFCFGVYSLVKINKFF. Residues 146–205 lie on the Cytoplasmic side of the membrane; the sequence is KTDQTVDLNRLLELFFWQLNAILNMKLFAFYGDHLESHSAPLDVYEDSFANKSSSGGDEV.

Its subcellular location is the membrane. This is an uncharacterized protein from Saccharomyces cerevisiae (strain ATCC 204508 / S288c) (Baker's yeast).